The chain runs to 107 residues: Large ribosomal subunit protein uL24 (107 aa).

Belongs to the universal ribosomal protein uL24 family. Part of the 50S ribosomal subunit.

In terms of biological role, one of two assembly initiator proteins, it binds directly to the 5'-end of the 23S rRNA, where it nucleates assembly of the 50S subunit. Its function is as follows. One of the proteins that surrounds the polypeptide exit tunnel on the outside of the subunit. The polypeptide is Large ribosomal subunit protein uL24 (Neisseria gonorrhoeae (strain ATCC 700825 / FA 1090)).